Reading from the N-terminus, the 166-residue chain is Probable chemoreceptor glutamine deamidase CheD (166 aa).

This sequence belongs to the CheD family.

It catalyses the reaction L-glutaminyl-[protein] + H2O = L-glutamyl-[protein] + NH4(+). Functionally, probably deamidates glutamine residues to glutamate on methyl-accepting chemotaxis receptors (MCPs), playing an important role in chemotaxis. The protein is Probable chemoreceptor glutamine deamidase CheD of Desulforamulus reducens (strain ATCC BAA-1160 / DSM 100696 / MI-1) (Desulfotomaculum reducens).